The chain runs to 78 residues: MKEFLAYIVKNLVDRPEEVHLKEVQGTNTIIYELTVAKGDIGKIIGKEGRTIKAIRTLLVSVASRDNVKVSLEIMEER.

The KH domain occupies 29-78 (TIIYELTVAKGDIGKIIGKEGRTIKAIRTLLVSVASRDNVKVSLEIMEER).

Belongs to the KhpA RNA-binding protein family.

Its subcellular location is the cytoplasm. Its function is as follows. A probable RNA-binding protein. This is RNA-binding protein KhpA from Chlamydia muridarum (strain MoPn / Nigg).